Consider the following 2474-residue polypeptide: Polyprotein P1234 (2474 aa).

The region spanning 28–257 (EATQVTDNDH…EERILLRSWH (230 aa)) is the Alphavirus-like MT domain. The tract at residues 242–261 (GSTIYTEERILLRSWHLPNV) is nsP1 membrane-binding. Cysteine 417 is lipidated: S-palmitoyl cysteine; by host. Residues 674–839 (CVKKADAGPM…HEICTEVYHK (166 aa)) form the (+)RNA virus helicase ATP-binding domain. 719 to 726 (GVPGSGKS) is an a ribonucleoside 5'-triphosphate binding site. The region spanning 840–988 (SISRRCTKTV…LEEWQAEHDA (149 aa)) is the (+)RNA virus helicase C-terminal domain. The 320-residue stretch at 1001-1320 (DVYQNKVHVC…IVLNNIYQGS (320 aa)) folds into the Peptidase C9 domain. The segment at 1002–1021 (VYQNKVHVCWAKALEPVLAT) is nucleolus localization signal. Cysteine 1010 acts as the For cysteine protease nsP2 activity in catalysis. The Nuclear export signal motif lies at 1054–1063 (TRFFGVDIDS). The For cysteine protease nsP2 activity role is filled by histidine 1079. A Nuclear localization signal motif is present at residues 1177 to 1181 (PGKRV). In terms of domain architecture, Macro spans 1328-1486 (APAYRVIRGD…RIKDAIARKE (159 aa)). Residues aspartate 1337, asparagine 1351, glycine 1359, glycine 1438, isoleucine 1439, and tyrosine 1440 each coordinate ADP-D-ribose. Zn(2+) is bound by residues cysteine 1589, cysteine 1591, cysteine 1614, and cysteine 1632. Residues 1773–1785 (LITFDSVTDIFEN) are binding to host G3BP family members. The tract at residues 1820 to 1841 (TEEKPIPKPRTRTTKYKQPPGV) is disordered. Residues 1838–1854 (PPGVARSISEAELDEFI) are binding to host FXR family members. A RdRp catalytic domain is found at 2231 to 2346 (DAVLETDIAS…KGVKSDALMA (116 aa)).

Interacts with non-structural protein 3. Interacts with RNA-directed RNA polymerase nsP4. Interacts with protease nsP2. interacts with itself. As to quaternary structure, interacts with mRNA-capping enzyme nsP1. Interacts with host DDX1. Interacts with host DDX3. Interacts (via C-terminus) with host FXR1; this interaction inhibits the formation of host stress granules on viral mRNAs and the nsp3-FXR1 complexes bind viral RNAs and probably orchestrate the assembly of viral replication complexes. Interacts (via C-terminus) with host FXR2; this interaction inhibits the formation of host stress granules on viral mRNAs and the nsp3-FXR2 complexes bind viral RNAs and probably orchestrate the assembly of viral replication complexes. Interacts (via C-terminus) with host FMR1; this interaction inhibits the formation of host stress granules on viral mRNAs and the nsp3-FMR1 complexes bind viral RNAs and probably orchestrate the assembly of viral replication complexes. Interacts (via C-terminus) with host G3BP1; this interaction inhibits the formation of host stress granules on viral mRNAs and the nsp3-G3BP1 complexes bind viral RNAs and probably orchestrate the assembly of viral replication complexes. Interacts (via C-terminus) with host G3BP2; this interaction inhibits the formation of host stress granules on viral mRNAs and the nsp3-G3BP2 complexes bind viral RNAs and probably orchestrate the assembly of viral replication complexes. In terms of assembly, interacts with mRNA-capping enzyme nsP1. Interacts with protease nsP2. interacts with itself. Interacts with RNA-directed RNA polymerase nsP4. Interacts with mRNA-capping enzyme nsP1. Interacts with KPNA1/karyopherin-alpha1; this interaction probably allows the active transport of protease nsP2 into the host nucleus. It depends on Mg(2+) as a cofactor. Mn(2+) is required as a cofactor. Post-translationally, specific enzymatic cleavages in vivo yield mature proteins. The processing of the polyprotein is temporally regulated. In early stages (1.7 hpi), P1234 is first cleaved in trans through its nsP2 protease activity, releasing P123' and nsP4, which associate to form the early replication complex. At the same time, P1234 is also cut at the nsP1/nsP2 site early in infection but with lower efficiency. After replication of the viral minus-strand RNAs (4 hpi), the polyproteins are cut at the nsP1/nsP2 and nsP2/nsP3 sites very efficiently, preventing accumulation of P123' and P1234 and allowing the formation of the late replication complex. NsP3'/nsP4 site is not cleaved anymore and P34 is produced rather than nsP4. In terms of processing, specific enzymatic cleavages in vivo yield mature proteins. The processing of the polyprotein is temporally regulated. In early stages (1.7 hpi), P123 is cleaved at the nsP1/nsP2 site with low efficiency. After replication of the viral minus-strand RNAs (4 hpi), the polyproteins are cut at the nsP1/nsP2 and nsP2/nsP3 sites very efficiently, preventing accumulation of P123 and allowing the formation of the late replication complex. Specific enzymatic cleavages in vivo yield mature proteins. The processing of the polyprotein is temporally regulated. In early stages (1.7 hpi), P123' is cleaved at the nsP1/nsP2 site with low efficiency. After replication of the viral minus-strand RNAs (4 hpi), the polyproteins are cut at the nsP1/nsP2 and nsP2/nsP3 sites very efficiently, preventing accumulation of P123' and allowing the formation of the late replication complex. Post-translationally, palmitoylated by host palmitoyltransferases ZDHHC2 and ZDHHC19. In terms of processing, phosphorylated by host on serines and threonines. Ubiquitinated; targets the protein for rapid degradation via the ubiquitin system. Nsp4 is present in extremely low quantities due to low frequency of translation through the amber stop-codon and the degradation by the ubiquitin pathway.

The protein localises to the host cytoplasmic vesicle membrane. It localises to the host cell membrane. Its subcellular location is the host cell projection. The protein resides in the host filopodium. It is found in the host nucleus. The protein localises to the host cytoplasm. It catalyses the reaction GTP + S-adenosyl-L-methionine = N(7)-methyl-GTP + S-adenosyl-L-homocysteine. It carries out the reaction N(7)-methyl-GTP + L-histidyl-[protein] = N(tele)-(N(7)-methylguanosine 5'-phospho)-L-histidyl-[protein] + diphosphate. The enzyme catalyses N(tele)-(N(7)-methylguanosine 5'-phospho)-L-histidyl-[protein] + a 5'-end diphospho-(purine-ribonucleoside) in mRNA + H(+) = a 5'-end (N(7)-methyl 5'-triphosphoguanosine)-(purine-ribonucleoside) in mRNA + L-histidyl-[protein]. The catalysed reaction is a 5'-end triphospho-ribonucleoside in mRNA + H2O = a 5'-end diphospho-ribonucleoside in mRNA + phosphate + H(+). It catalyses the reaction a ribonucleoside 5'-triphosphate + H2O = a ribonucleoside 5'-diphosphate + phosphate + H(+). It carries out the reaction ATP + H2O = ADP + phosphate + H(+). The enzyme catalyses RNA(n) + a ribonucleoside 5'-triphosphate = RNA(n+1) + diphosphate. The catalysed reaction is 4-O-(ADP-D-ribosyl)-L-aspartyl-[protein] + H2O = L-aspartyl-[protein] + ADP-D-ribose + H(+). It catalyses the reaction 5-O-(ADP-D-ribosyl)-L-glutamyl-[protein] + H2O = L-glutamyl-[protein] + ADP-D-ribose + H(+). It carries out the reaction RNA(n) + ATP = RNA(n)-3'-adenine ribonucleotide + diphosphate. The enzyme catalyses ADP-alpha-D-ribose 1''-phosphate + H2O = ADP-D-ribose + phosphate. Inhibited by sinefungin. Its function is as follows. Inactive precursor of the viral replicase, which is activated by cleavages carried out by the viral protease nsP2. Functionally, the early replication complex formed by the polyprotein P123 and nsP4 synthesizes the minus-strand RNAs (antigenome). Polyprotein P123 is a short-lived polyprotein that accumulates during early stage of infection. As soon P123 is cleaved into mature proteins, the plus-strand RNAs synthesis begins. In terms of biological role, the early replication complex formed by the polyprotein P123' and nsP4 synthesizes minus-strand RNAs (antigenome). Polyprotein P123' is a short-lived polyprotein that accumulates during early stage of infection. As soon P123' is cleaved into mature proteins, the plus-strand RNAs synthesis begins. Cytoplasmic capping enzyme that catalyzes two virus-specific reactions: methyltransferase and nsP1 guanylyltransferase. mRNA-capping is necessary since all viral RNAs are synthesized in the cytoplasm, and host capping enzymes are restricted to the nucleus. The enzymatic reaction involves a covalent link between 7-methyl-GMP and nsP1, whereas eukaryotic capping enzymes form a covalent complex only with GMP. NsP1 capping consists in the following reactions: GTP is first methylated into 7-methyl-GMP and then is covalently linked to nsP1 to form the m7GMp-nsP1 complex from which 7-methyl-GMP complex is transferred to the mRNA to create the cap structure. NsP1 is also needed for the initiation of the minus-strand RNAs synthesis. Probably serves as a membrane anchor for the replication complex composed of nsP1-nsP4. Nsp1 is needed for the initiation of the minus-strand RNAs synthesis. Palmitoylated nsP1 is remodeling host cell cytoskeleton, and induces filopodium-like structure formation at the surface of the host cell. Its function is as follows. Multifunctional protein whose N-terminus is part of the RNA polymerase complex and displays NTPase, RNA triphosphatase and helicase activities. NTPase and RNA triphosphatase are involved in viral RNA capping and helicase keeps a check on the dsRNA replication intermediates. The C-terminus harbors a protease that specifically cleaves the polyproteins and releases the mature proteins. Required for the shutoff of minus-strand RNAs synthesis. Inhibits host translation to ensure maximal viral gene expression and evade host immune response. Functionally, seems to be essential for minus-strand RNAs and subgenomic 26S mRNAs synthesis. Displays mono-ADP-ribosylhydrolase activity. ADP-ribosylation is a post-translational modification that controls various processes of the host cell and the virus probably needs to revert it for optimal viral replication. Binds proteins of FXR and G3BP families and sequesters them into the viral RNA replication complexes thereby inhibiting the formation of host stress granules on viral mRNAs. The nsp3-FXR and nsp3-G3BP complexes bind viral RNAs and probably orchestrate the assembly of viral replication complexes, thanks to the ability of G3BP and FXR family members to self-assemble and bind DNA. In terms of biological role, seems to be essential for minus-strand RNAs and subgenomic 26S mRNAs synthesis. Displays mono-ADP-ribosylhydrolase activity. ADP-ribosylation is a post-translational modification that controls various processes of the host cell and the virus probably needs to revert it for optimal viral replication. Binds proteins of FXR and G3BP families and sequesters them into the viral RNA replication complexes thereby inhibiting the formation of host stress granules on viral mRNAs. The nsp3'-FXR and nsp3-G3BP complexes bind viral RNAs and probably orchestrate the assembly of viral replication complexes, thanks to the ability of G3BP and FXR family members to self-assemble and bind DNA. RNA dependent RNA polymerase. Replicates genomic and antigenomic RNA by recognizing replications specific signals. The early replication complex formed by the polyprotein P123 and nsP4 synthesizes minus-strand RNAs. The late replication complex composed of fully processed nsP1-nsP4 is responsible for the production of genomic and subgenomic plus-strand RNAs. The sequence is that of Polyprotein P1234 from Eastern equine encephalitis virus (strain PE-3.0815) (EEEV).